Reading from the N-terminus, the 652-residue chain is Starch synthase 1, chloroplastic/amyloplastic (652 aa).

The N-terminal 49 residues, 1–49 (MASLQISGSVKFEPFVGFNRIRHFRPIASLGFPRFRRRFSIGRSLLLRR), are a transit peptide targeting the chloroplast. Residue lysine 156 coordinates ADP-alpha-D-glucose.

The protein belongs to the glycosyltransferase 1 family. Bacterial/plant glycogen synthase subfamily. Expressed in roots, leaves, stems, buds and flowers.

Its subcellular location is the plastid. It localises to the chloroplast. It is found in the amyloplast. The enzyme catalyses [(1-&gt;4)-alpha-D-glucosyl](n) + ADP-alpha-D-glucose = [(1-&gt;4)-alpha-D-glucosyl](n+1) + ADP + H(+). It functions in the pathway glycan biosynthesis; starch biosynthesis. Its function is as follows. Involved in the synthesis of short glycan chains within amylopectin in leaves. Is required to generate chains up to about a degree of polymerization of 10 (DP10). The sequence is that of Starch synthase 1, chloroplastic/amyloplastic (SS1) from Arabidopsis thaliana (Mouse-ear cress).